The primary structure comprises 951 residues: UvrABC system protein A (951 aa).

33 to 40 (GLSGSGKS) provides a ligand contact to ATP. The segment at 252–279 (CPICGFTVGELEPRLFSFNAPQGACPDC) adopts a C4-type zinc-finger fold. ABC transporter domains are found at residues 309-587 (WNPI…RKSL) and 607-935 (GNGK…QYLK). 639–646 (GVSGSGKS) is an ATP binding site. The segment at 738–764 (CEACHGDGILKIEMNFLPDVFVPCEVC) adopts a C4-type zinc-finger fold.

This sequence belongs to the ABC transporter superfamily. UvrA family. In terms of assembly, forms a heterotetramer with UvrB during the search for lesions.

It is found in the cytoplasm. Functionally, the UvrABC repair system catalyzes the recognition and processing of DNA lesions. UvrA is an ATPase and a DNA-binding protein. A damage recognition complex composed of 2 UvrA and 2 UvrB subunits scans DNA for abnormalities. When the presence of a lesion has been verified by UvrB, the UvrA molecules dissociate. The polypeptide is UvrABC system protein A (Lactiplantibacillus plantarum (strain ATCC BAA-793 / NCIMB 8826 / WCFS1) (Lactobacillus plantarum)).